We begin with the raw amino-acid sequence, 310 residues long: HTH-type transcriptional activator TtdR (310 aa).

In terms of domain architecture, HTH lysR-type spans 6 to 63; sequence PLAKDLQVLVEIVHSGSFSAAAATLGQTPAFVTKRIQILENTLATTLLNRSARGVALT. Residues 23-42 constitute a DNA-binding region (H-T-H motif); that stretch reads FSAAAATLGQTPAFVTKRIQ.

This sequence belongs to the LysR transcriptional regulatory family.

In terms of biological role, positive regulator required for L-tartrate-dependent anaerobic growth on glycerol. Induces expression of the ttdA-ttdB-ygjE operon. The chain is HTH-type transcriptional activator TtdR (ttdR) from Escherichia coli O6:H1 (strain CFT073 / ATCC 700928 / UPEC).